The following is a 450-amino-acid chain: Phosphoglucosamine mutase (450 aa).

The Phosphoserine intermediate role is filled by S102. Residues S102, D244, D246, and D248 each coordinate Mg(2+). S102 is subject to Phosphoserine.

Belongs to the phosphohexose mutase family. Mg(2+) serves as cofactor. Post-translationally, activated by phosphorylation.

It catalyses the reaction alpha-D-glucosamine 1-phosphate = D-glucosamine 6-phosphate. Its function is as follows. Catalyzes the conversion of glucosamine-6-phosphate to glucosamine-1-phosphate. In Solidesulfovibrio magneticus (strain ATCC 700980 / DSM 13731 / RS-1) (Desulfovibrio magneticus), this protein is Phosphoglucosamine mutase.